Consider the following 266-residue polypeptide: 3-methyl-2-oxobutanoate hydroxymethyltransferase (266 aa).

Mg(2+) is bound by residues D43 and D82. Residues 43–44, D82, and K110 contribute to the 3-methyl-2-oxobutanoate site; that span reads DS. E112 serves as a coordination point for Mg(2+). The Proton acceptor role is filled by E179.

This sequence belongs to the PanB family. In terms of assembly, homodecamer; pentamer of dimers. Requires Mg(2+) as cofactor.

The protein localises to the cytoplasm. It catalyses the reaction 3-methyl-2-oxobutanoate + (6R)-5,10-methylene-5,6,7,8-tetrahydrofolate + H2O = 2-dehydropantoate + (6S)-5,6,7,8-tetrahydrofolate. The protein operates within cofactor biosynthesis; (R)-pantothenate biosynthesis; (R)-pantoate from 3-methyl-2-oxobutanoate: step 1/2. Its function is as follows. Catalyzes the reversible reaction in which hydroxymethyl group from 5,10-methylenetetrahydrofolate is transferred onto alpha-ketoisovalerate to form ketopantoate. The protein is 3-methyl-2-oxobutanoate hydroxymethyltransferase of Psychrobacter arcticus (strain DSM 17307 / VKM B-2377 / 273-4).